The following is a 244-amino-acid chain: Nodulation protein G (244 aa).

11 to 35 (VTGASGAIGGAIARVLHAQGAIVGL) lines the NAD(+) pocket. Serine 139 lines the substrate pocket. The active-site Proton acceptor is tyrosine 152.

This sequence belongs to the short-chain dehydrogenases/reductases (SDR) family.

Proposed to modify Nod factor fatty acyl chain. The polypeptide is Nodulation protein G (nodG) (Rhizobium meliloti (Ensifer meliloti)).